The primary structure comprises 365 residues: DNA repair protein rhp51 (365 aa).

The tract at residues 1 to 25 is disordered; that stretch reads MADTEVEMQVSAADTNNNENGQAQS. The span at 12–25 shows a compositional bias: polar residues; the sequence is AADTNNNENGQAQS. 149-156 contacts ATP; sequence GEFRTGKS.

It belongs to the RecA family. RAD51 subfamily. In terms of assembly, interacts with rad22, rad54, rdh54, rhp54, rti1, swi2 and swi5. Forms homooiligomers.

The protein resides in the nucleus. Functionally, required both for recombination and for the repair of DNA damage caused by X-rays. Binds to single and double-stranded DNA, in the presence of magnesium, and exhibits DNA-dependent ATPase activity. Promotes DNA strand annealing and strand exchange via DNA recombinase activity and forms helical nucleoprotein filaments. The polypeptide is DNA repair protein rhp51 (rhp51) (Schizosaccharomyces pombe (strain 972 / ATCC 24843) (Fission yeast)).